We begin with the raw amino-acid sequence, 114 residues long: Transmembrane protein 256 homolog (114 aa).

The signal sequence occupies residues 1-25; the sequence is MAAGRVWGRLGAVSGALAVTAGAYG. Topologically, residues 26-64 are extracellular; the sequence is AHGFRRSDRDEYLKELFETGNRYHFLHSLALLAVPHCRR. The chain crosses the membrane as a helical span at residues 65 to 85; it reads PLLAGSLLTSGIVLFSGTFYY. Topologically, residues 86-93 are cytoplasmic; it reads QALSGDPT. Residues 94–114 traverse the membrane as a helical segment; that stretch reads LTKAAPYGGTLLILGWAAMAL.

It belongs to the TMEM256 family.

Its subcellular location is the cell membrane. This chain is Transmembrane protein 256 homolog, found in Bufo gargarizans (Asian toad).